The sequence spans 97 residues: UPF0235 protein cbdbA1230 (97 aa).

The protein belongs to the UPF0235 family.

This is UPF0235 protein cbdbA1230 from Dehalococcoides mccartyi (strain CBDB1).